A 61-amino-acid polypeptide reads, in one-letter code: Large ribosomal subunit protein uL30 (61 aa).

It belongs to the universal ribosomal protein uL30 family. As to quaternary structure, part of the 50S ribosomal subunit.

The sequence is that of Large ribosomal subunit protein uL30 from Oenococcus oeni (strain ATCC BAA-331 / PSU-1).